The primary structure comprises 62 residues: Large ribosomal subunit protein bL33 (62 aa).

It belongs to the bacterial ribosomal protein bL33 family.

The chain is Large ribosomal subunit protein bL33 from Azobacteroides pseudotrichonymphae genomovar. CFP2.